A 200-amino-acid polypeptide reads, in one-letter code: Small ribosomal subunit protein uS4 (200 aa).

Residues 22 to 42 (TGKELEKRPYAPGPHGPNQRK) form a disordered region. One can recognise an S4 RNA-binding domain in the interval 92–152 (ARLDNLVYRM…EKSNNLVVVK (61 aa)).

It belongs to the universal ribosomal protein uS4 family. Part of the 30S ribosomal subunit. Contacts protein S5. The interaction surface between S4 and S5 is involved in control of translational fidelity.

Functionally, one of the primary rRNA binding proteins, it binds directly to 16S rRNA where it nucleates assembly of the body of the 30S subunit. In terms of biological role, with S5 and S12 plays an important role in translational accuracy. This Bacillus thuringiensis subsp. konkukian (strain 97-27) protein is Small ribosomal subunit protein uS4.